Consider the following 163-residue polypeptide: 2-C-methyl-D-erythritol 2,4-cyclodiphosphate synthase (163 aa).

A divalent metal cation contacts are provided by D12 and H14. 4-CDP-2-C-methyl-D-erythritol 2-phosphate-binding positions include 12 to 14 and 38 to 39; these read DVH and HS. A divalent metal cation is bound at residue H46. Residues 60-62, 136-139, F143, and R146 each bind 4-CDP-2-C-methyl-D-erythritol 2-phosphate; these read DIG and TTSE.

This sequence belongs to the IspF family. As to quaternary structure, homotrimer. Requires a divalent metal cation as cofactor.

The enzyme catalyses 4-CDP-2-C-methyl-D-erythritol 2-phosphate = 2-C-methyl-D-erythritol 2,4-cyclic diphosphate + CMP. It functions in the pathway isoprenoid biosynthesis; isopentenyl diphosphate biosynthesis via DXP pathway; isopentenyl diphosphate from 1-deoxy-D-xylulose 5-phosphate: step 4/6. Its function is as follows. Involved in the biosynthesis of isopentenyl diphosphate (IPP) and dimethylallyl diphosphate (DMAPP), two major building blocks of isoprenoid compounds. Catalyzes the conversion of 4-diphosphocytidyl-2-C-methyl-D-erythritol 2-phosphate (CDP-ME2P) to 2-C-methyl-D-erythritol 2,4-cyclodiphosphate (ME-CPP) with a corresponding release of cytidine 5-monophosphate (CMP). In Xanthomonas oryzae pv. oryzae (strain MAFF 311018), this protein is 2-C-methyl-D-erythritol 2,4-cyclodiphosphate synthase.